A 630-amino-acid chain; its full sequence is Protein mono-ADP-ribosyltransferase PARP6 (630 aa).

Cys237 bears the ADP-ribosylcysteine mark. Positions 394-620 constitute a PARP catalytic domain; the sequence is EMTQGSYLEI…QDPKIQKEIM (227 aa). The residue at position 600 (Asp600) is an ADP-ribosyl aspartic acid.

Belongs to the ARTD/PARP family. Auto-mono-ADP-ribosylated.

The catalysed reaction is L-aspartyl-[protein] + NAD(+) = 4-O-(ADP-D-ribosyl)-L-aspartyl-[protein] + nicotinamide. It carries out the reaction L-cysteinyl-[protein] + NAD(+) = S-(ADP-D-ribosyl)-L-cysteinyl-[protein] + nicotinamide + H(+). Functionally, mono-ADP-ribosyltransferase that mediates mono-ADP-ribosylation of target proteins. In Homo sapiens (Human), this protein is Protein mono-ADP-ribosyltransferase PARP6.